The primary structure comprises 364 residues: Dihydroflavonol 4-reductase (364 aa).

Residues K45 and Y164 each contribute to the NADP(+) site.

This sequence belongs to the NAD(P)-dependent epimerase/dehydratase family. Dihydroflavonol-4-reductase subfamily.

It carries out the reaction a (2R,3S,4S)-leucoanthocyanidin + NADP(+) = a (2R,3R)-dihydroflavonol + NADPH + H(+). The enzyme catalyses (2S)-flavan-4-ol + NADP(+) = (2S)-flavanone + NADPH + H(+). The protein operates within pigment biosynthesis; anthocyanin biosynthesis. In terms of biological role, bifunctional enzyme involved in flavonoid metabolism. This chain is Dihydroflavonol 4-reductase (F), found in Callistephus chinensis (China aster).